A 1063-amino-acid chain; its full sequence is E3 ubiquitin-protein ligase PDZRN3 (1063 aa).

Residues 18–56 (CALCHKVLEDPLTTPCGHVFCAGCVLPWVVQEGSCPARC) form an RING-type; degenerate zinc finger. The segment at 100–158 (EHLERCDFAPARCRHAGCGQLLLRRDVEAHMRDACDARPVGRCQEGCGLPLTHGEQRAG) adopts a TRAF-type zinc-finger fold. PDZ domains follow at residues 249 to 339 (TLVL…LRRT) and 419 to 503 (EVGL…IARP). The residue at position 427 (Ser-427) is a Phosphoserine. Residues 545–602 (QKKHEEDGGTTDTATILSNQHEKDSGVGRTDESTRNDESSEQENNGEDATASANPLAG) are disordered. A compositionally biased stretch (polar residues) spans 554-563 (TTDTATILSN). A compositionally biased stretch (basic and acidic residues) spans 564–582 (QHEKDSGVGRTDESTRNDE). Residues 680–705 (ESVDKELELLNEELRSIELECLSIVR) adopt a coiled-coil conformation. A compositionally biased stretch (basic and acidic residues) spans 746–755 (ELPEKSDKDS). Disordered regions lie at residues 746 to 798 (ELPE…IEAY) and 834 to 853 (IKER…PKLG). Over residues 756–770 (SSAYNTGESCRSTPL) the composition is skewed to polar residues.

In terms of assembly, interacts with NLGN1 and EFNB2. Interacts with UBE2D2 and with MUSK via the first PDZ domain. In myotubes, the interaction between PDZRN3 and MUSK is enhanced upon agrin stimulation. Auto-ubiquitinated. As to expression, highly expressed in skeletal and cardiac muscle and at lower levels in spinal cord and brain (at protein level). Also expressed in kidney and lung. In muscles, concentrated at the neuromuscular junction (NMJ).

The protein resides in the synapse. It localises to the cytoplasm. It carries out the reaction S-ubiquitinyl-[E2 ubiquitin-conjugating enzyme]-L-cysteine + [acceptor protein]-L-lysine = [E2 ubiquitin-conjugating enzyme]-L-cysteine + N(6)-ubiquitinyl-[acceptor protein]-L-lysine.. The protein operates within protein modification; protein ubiquitination. E3 ubiquitin-protein ligase. Plays an important role in regulating the surface level of MUSK on myotubes. Mediates the ubiquitination of MUSK, promoting its endocytosis and lysosomal degradation. Might contribute to terminal myogenic differentiation. The chain is E3 ubiquitin-protein ligase PDZRN3 (Pdzrn3) from Mus musculus (Mouse).